We begin with the raw amino-acid sequence, 381 residues long: Protein YkfC (381 aa).

Residues 72–337 enclose the Reverse transcriptase domain; it reads LRDELLSGHY…DGFIFLGHRL (266 aa). Residues aspartate 166, aspartate 284, and aspartate 285 each coordinate Mg(2+).

Belongs to the bacterial reverse transcriptase family.

This is Protein YkfC (ykfC) from Escherichia coli (strain K12).